Reading from the N-terminus, the 174-residue chain is 3-hydroxyanthranilate 3,4-dioxygenase (174 aa).

Arg47 contacts O2. Fe cation-binding residues include His51, Glu57, and His95. Substrate is bound at residue Glu57. 2 residues coordinate substrate: Arg99 and Glu110. Positions 125, 128, 162, and 165 each coordinate Fe cation.

Belongs to the 3-HAO family. In terms of assembly, homodimer. Fe(2+) serves as cofactor.

The catalysed reaction is 3-hydroxyanthranilate + O2 = (2Z,4Z)-2-amino-3-carboxymuconate 6-semialdehyde. The protein operates within cofactor biosynthesis; NAD(+) biosynthesis; quinolinate from L-kynurenine: step 3/3. In terms of biological role, catalyzes the oxidative ring opening of 3-hydroxyanthranilate to 2-amino-3-carboxymuconate semialdehyde, which spontaneously cyclizes to quinolinate. This chain is 3-hydroxyanthranilate 3,4-dioxygenase, found in Paraburkholderia phytofirmans (strain DSM 17436 / LMG 22146 / PsJN) (Burkholderia phytofirmans).